A 540-amino-acid polypeptide reads, in one-letter code: Phosphoenolpyruvate carboxykinase (ATP) (540 aa).

Substrate is bound at residue Arg-65. Residue Lys-87 is modified to N6-acetyllysine. Residues Tyr-207 and Lys-213 each contribute to the substrate site. ATP-binding positions include Lys-213, His-232, and 248 to 256; that span reads GLSGTGKTT. Mn(2+) is bound by residues Lys-213 and His-232. Asp-269 is a binding site for Mn(2+). ATP-binding positions include Glu-297, Arg-333, 449–450, and Thr-455; that span reads RI. Arg-333 is a binding site for substrate. Residue Lys-523 is modified to N6-acetyllysine.

This sequence belongs to the phosphoenolpyruvate carboxykinase (ATP) family. In terms of assembly, monomer. Mn(2+) serves as cofactor.

It is found in the cytoplasm. It carries out the reaction oxaloacetate + ATP = phosphoenolpyruvate + ADP + CO2. It functions in the pathway carbohydrate biosynthesis; gluconeogenesis. Functionally, involved in the gluconeogenesis. Catalyzes the conversion of oxaloacetate (OAA) to phosphoenolpyruvate (PEP) through direct phosphoryl transfer between the nucleoside triphosphate and OAA. This chain is Phosphoenolpyruvate carboxykinase (ATP), found in Escherichia fergusonii (strain ATCC 35469 / DSM 13698 / CCUG 18766 / IAM 14443 / JCM 21226 / LMG 7866 / NBRC 102419 / NCTC 12128 / CDC 0568-73).